We begin with the raw amino-acid sequence, 283 residues long: Elongation factor Ts (283 aa).

The segment at 80–83 is involved in Mg(2+) ion dislocation from EF-Tu; sequence TDFV.

It belongs to the EF-Ts family.

The protein localises to the cytoplasm. Its function is as follows. Associates with the EF-Tu.GDP complex and induces the exchange of GDP to GTP. It remains bound to the aminoacyl-tRNA.EF-Tu.GTP complex up to the GTP hydrolysis stage on the ribosome. This Pectobacterium carotovorum subsp. carotovorum (strain PC1) protein is Elongation factor Ts.